Here is a 321-residue protein sequence, read N- to C-terminus: Probable arabinan endo-1,5-alpha-L-arabinosidase C (321 aa).

The first 18 residues, 1 to 18, serve as a signal peptide directing secretion; sequence MYLYTLILLFLASANVNA. Residue Asp-33 is the Proton acceptor of the active site. N-linked (GlcNAc...) asparagine glycosylation occurs at Asn-192. Glu-200 (proton donor) is an active-site residue. Asn-224 is a glycosylation site (N-linked (GlcNAc...) asparagine).

Belongs to the glycosyl hydrolase 43 family.

The protein localises to the secreted. The enzyme catalyses Endohydrolysis of (1-&gt;5)-alpha-arabinofuranosidic linkages in (1-&gt;5)-arabinans.. The protein operates within glycan metabolism; L-arabinan degradation. In terms of biological role, endo-1,5-alpha-L-arabinanase involved in degradation of pectin. Its preferred substrate is linear 1,5-alpha-L-arabinan. In Aspergillus fumigatus (strain CBS 144.89 / FGSC A1163 / CEA10) (Neosartorya fumigata), this protein is Probable arabinan endo-1,5-alpha-L-arabinosidase C (abnC).